An 804-amino-acid polypeptide reads, in one-letter code: Probable replication endonuclease from prophage-like region (804 aa).

Active-site O-(5'-phospho-DNA)-tyrosine intermediate residues include Tyr-498 and Tyr-502.

It belongs to the phage GPA family.

Possible endonuclease which induces a single-strand cut and initiates DNA replication. This Shigella boydii serotype 4 (strain Sb227) protein is Probable replication endonuclease from prophage-like region.